The sequence spans 360 residues: Fe(3+) ions import ATP-binding protein FbpC (360 aa).

Residues 4 to 236 (LEIKGLHKHY…PKDRMIAEFL (233 aa)) enclose the ABC transporter domain. 36 to 43 (GPSGCGKT) contributes to the ATP binding site.

It belongs to the ABC transporter superfamily. Fe(3+) ion importer (TC 3.A.1.10) family. As to quaternary structure, the complex is composed of two ATP-binding proteins (FbpC), two transmembrane proteins (FbpB) and a solute-binding protein (FbpA).

The protein localises to the cell inner membrane. It carries out the reaction Fe(3+)(out) + ATP + H2O = Fe(3+)(in) + ADP + phosphate + H(+). In terms of biological role, part of the ABC transporter complex FbpABC involved in Fe(3+) ions import. Responsible for energy coupling to the transport system. The protein is Fe(3+) ions import ATP-binding protein FbpC of Mesorhizobium japonicum (strain LMG 29417 / CECT 9101 / MAFF 303099) (Mesorhizobium loti (strain MAFF 303099)).